The primary structure comprises 489 residues: Probable capsid protein (489 aa).

Basic and acidic residues predominate over residues 87 to 101 (RMERGESSETKREQQ). Residues 87-111 (RMERGESSETKREQQDLGATRKRKI) are disordered. Positions 107-110 (RKRK) match the Nuclear localization signal motif. The CCHC-type zinc finger occupies 409–426 (CRCWICTEEGHYANECPN). A disordered region spans residues 466–489 (ETTSEEESTTDSDSSSSDDEQLSF).

This sequence belongs to the caulimoviridae capsid protein family. As to quaternary structure, interacts (via nuclear localization signal) with host importin alpha.

It localises to the virion. It is found in the host nucleus. In terms of biological role, self assembles to form an icosahedral capsid, about 50 nm in diameter, nm, composed of 420 subunits of the viral capsid protein. The capsid encapsulates the genomic dsDNA. Following virus entry into host cell, provides nuclear import of the viral genome. Virus particles do not enter the nucleus, but dock at the nuclear membrane through the interaction with host importins. The protein is Probable capsid protein of Scrophularia californica (California bee plant).